The following is a 366-amino-acid chain: Ribosomal RNA large subunit methyltransferase M (366 aa).

S-adenosyl-L-methionine contacts are provided by residues serine 187, 220–223 (SPGG), aspartate 239, aspartate 259, and aspartate 276. The active-site Proton acceptor is lysine 305.

The protein belongs to the class I-like SAM-binding methyltransferase superfamily. RNA methyltransferase RlmE family. RlmM subfamily. In terms of assembly, monomer.

The protein localises to the cytoplasm. The catalysed reaction is cytidine(2498) in 23S rRNA + S-adenosyl-L-methionine = 2'-O-methylcytidine(2498) in 23S rRNA + S-adenosyl-L-homocysteine + H(+). In terms of biological role, catalyzes the 2'-O-methylation at nucleotide C2498 in 23S rRNA. The polypeptide is Ribosomal RNA large subunit methyltransferase M (Tolumonas auensis (strain DSM 9187 / NBRC 110442 / TA 4)).